Consider the following 197-residue polypeptide: Large ribosomal subunit protein uL10 (197 aa).

Residues 162-197 (GGASAPAAEEAPAAEEAAAEEVAAPAEAAEAATEEN) are disordered. Positions 163–197 (GASAPAAEEAPAAEEAAAEEVAAPAEAAEAATEEN) are enriched in low complexity.

It belongs to the universal ribosomal protein uL10 family. In terms of assembly, part of the ribosomal stalk of the 50S ribosomal subunit. The N-terminus interacts with L11 and the large rRNA to form the base of the stalk. The C-terminus forms an elongated spine to which L12 dimers bind in a sequential fashion forming a multimeric L10(L12)X complex.

Forms part of the ribosomal stalk, playing a central role in the interaction of the ribosome with GTP-bound translation factors. In Paenarthrobacter aurescens (strain TC1), this protein is Large ribosomal subunit protein uL10.